The sequence spans 181 residues: Large ribosomal subunit protein uL6 (181 aa).

The protein belongs to the universal ribosomal protein uL6 family. As to quaternary structure, part of the 50S ribosomal subunit.

Functionally, this protein binds to the 23S rRNA, and is important in its secondary structure. It is located near the subunit interface in the base of the L7/L12 stalk, and near the tRNA binding site of the peptidyltransferase center. This Coprothermobacter proteolyticus (strain ATCC 35245 / DSM 5265 / OCM 4 / BT) protein is Large ribosomal subunit protein uL6.